The sequence spans 219 residues: Peptidyl-tRNA hydrolase (219 aa).

Residue tyrosine 26 participates in tRNA binding. Histidine 31 functions as the Proton acceptor in the catalytic mechanism. The tRNA site is built by tyrosine 78, asparagine 80, and asparagine 126.

It belongs to the PTH family. As to quaternary structure, monomer.

Its subcellular location is the cytoplasm. It catalyses the reaction an N-acyl-L-alpha-aminoacyl-tRNA + H2O = an N-acyl-L-amino acid + a tRNA + H(+). Its function is as follows. Hydrolyzes ribosome-free peptidyl-tRNAs (with 1 or more amino acids incorporated), which drop off the ribosome during protein synthesis, or as a result of ribosome stalling. Catalyzes the release of premature peptidyl moieties from peptidyl-tRNA molecules trapped in stalled 50S ribosomal subunits, and thus maintains levels of free tRNAs and 50S ribosomes. The chain is Peptidyl-tRNA hydrolase from Trichodesmium erythraeum (strain IMS101).